A 341-amino-acid chain; its full sequence is Cyanuric acid amidohydrolase (341 aa).

The RU A stretch occupies residues 1–90 (MAPIEILKFP…HVTFFLRSPG (90 aa)). Substrate-binding positions include Arg51 and 71–72 (SG). The interval 95–229 (GLSAAVGHTR…CHILVLASTS (135 aa)) is RU B. Residue Lys144 is part of the active site. Residues Arg176 and 212-213 (SS) each bind substrate. Catalysis depends on Ser212, which acts as the Nucleophile. An RU C region spans residues 235-341 (LHAVSRPMAD…SLCLVYETSI (107 aa)). A Mg(2+)-binding site is contributed by Glu273. Substrate is bound by residues Arg300 and 319 to 320 (SG). 5 residues coordinate Mg(2+): Ala322, Gln325, Gly326, Pro327, and Gly330.

This sequence belongs to the cyclic amide hydrolase (CyAH) family. Homotetramer.

The catalysed reaction is cyanurate + H2O = 1-carboxybiuret + H(+). It functions in the pathway xenobiotic degradation; atrazine degradation; biuret from cyanurate: step 1/1. Its activity is regulated as follows. Inhibited by barbituric acid. In terms of biological role, responsible for the hydrolysis of cyanuric acid, an intermediate formed during catabolism of s-triazine based compounds in herbicides such as atrazine and polymers such as melamine. Catalyzes the hydrolytic opening of the s-triazine ring of cyanuric acid (2,4,6-trihydroxy-s-triazine) to yield carbon dioxide and carboxybiuret, which spontaneously decarboxylates to biuret. Only active on cyanuric acid and N-methylisocyanuric acid. This Sarocladium sp protein is Cyanuric acid amidohydrolase.